Consider the following 228-residue polypeptide: ATP-dependent dethiobiotin synthetase BioD (228 aa).

12–17 (EIGKTT) provides a ligand contact to ATP. T16 provides a ligand contact to Mg(2+). K37 is a catalytic residue. S41 contacts substrate. ATP is bound by residues D54, 116 to 119 (EGAG), and 205 to 207 (PRL). The Mg(2+) site is built by D54 and E116.

It belongs to the dethiobiotin synthetase family. In terms of assembly, homodimer. Mg(2+) is required as a cofactor.

It localises to the cytoplasm. The catalysed reaction is (7R,8S)-7,8-diammoniononanoate + CO2 + ATP = (4R,5S)-dethiobiotin + ADP + phosphate + 3 H(+). It participates in cofactor biosynthesis; biotin biosynthesis; biotin from 7,8-diaminononanoate: step 1/2. In terms of biological role, catalyzes a mechanistically unusual reaction, the ATP-dependent insertion of CO2 between the N7 and N8 nitrogen atoms of 7,8-diaminopelargonic acid (DAPA, also called 7,8-diammoniononanoate) to form a ureido ring. The protein is ATP-dependent dethiobiotin synthetase BioD of Pseudomonas aeruginosa (strain UCBPP-PA14).